The chain runs to 138 residues: Large ribosomal subunit protein bL17 (138 aa).

It belongs to the bacterial ribosomal protein bL17 family. In terms of assembly, part of the 50S ribosomal subunit. Contacts protein L32.

In Granulibacter bethesdensis (strain ATCC BAA-1260 / CGDNIH1), this protein is Large ribosomal subunit protein bL17.